A 611-amino-acid polypeptide reads, in one-letter code: Serine/arginine repetitive matrix protein 4 (611 aa).

2 disordered regions span residues 38 to 248 (ARKP…PLQM) and 263 to 611 (SAAD…STRR). Composition is skewed to basic residues over residues 107–123 (RGKK…RRRS) and 131–189 (VKKK…HRCP). Over residues 190–202 (SRSQSSESRPSSC) the composition is skewed to low complexity. Basic and acidic residues predominate over residues 203 to 216 (ESRHRGRSPEEGQK). A compositionally biased stretch (basic residues) spans 217-226 (SRRRHSRRCS). Residues 270–290 (KTASPLTTSRGRSQEYDSGND) show a composition bias toward polar residues. Over residues 291–301 (TSSPPSTQTSS) the composition is skewed to low complexity. Residues 322-341 (LNSGNTSDSGNSFTTSSPQN) are compositionally biased toward polar residues. Low complexity-rich tracts occupy residues 390-422 (SRSS…SRST) and 430-461 (SRSP…SRYS). Residues 462–482 (PSRERDPKYSEKDSQQRERER) are compositionally biased toward basic and acidic residues. A compositionally biased stretch (basic residues) spans 483-498 (ARRRRRSYSPMRKRRR). The span at 499-508 (DSPSHLEARR) shows a compositional bias: basic and acidic residues. A compositionally biased stretch (low complexity) spans 522–549 (PSPSSSGSLSSTSSWYSSSSSRSASRSY). The segment covering 550–564 (SRSRSRSRSRRRSRT) has biased composition (basic residues). A compositionally biased stretch (low complexity) spans 565–580 (RTSSSSSSRSPSPGSR). The span at 581-595 (SRSRSRSRSRSRSRS) shows a compositional bias: basic residues. Positions 596 to 611 (QSRSYSSADSYSSTRR) are enriched in low complexity.

The protein belongs to the nSR100 family. Post-translationally, phosphorylated. In terms of tissue distribution, specifically expressed in neuronal cells (at protein level). Expressed in the cerebellum.

The protein localises to the nucleus. Functionally, splicing factor specifically required for neural cell differentiation. Acts in conjunction with nPTB/PTBP2 by binding directly to its regulated target transcripts and promotes neural-specific exon inclusion in many genes that function in neural cell differentiation. Required to promote the inclusion of neural-specific exon 10 in nPTB/PTBP2, leading to increased expression of neural-specific nPTB/PTBP2. Also promotes the inclusion of exon 16 in DAAM1 in neuron extracts. Promotes alternative splicing of REST transcripts to produce REST isoform 3 (REST4) with greatly reduced repressive activity, thereby activating expression of REST targets in neural cells. Plays an important role during embryonic development as well as in the proper functioning of the adult nervous system. Regulates alternative splicing events in genes with important neuronal functions. In Homo sapiens (Human), this protein is Serine/arginine repetitive matrix protein 4 (SRRM4).